Consider the following 335-residue polypeptide: tRNA pseudouridine synthase D (335 aa).

Asp77 (nucleophile) is an active-site residue. One can recognise a TRUD domain in the interval 152 to 308 (GFPNYFTEQR…AQHLSWSFIP (157 aa)).

Belongs to the pseudouridine synthase TruD family.

The catalysed reaction is uridine(13) in tRNA = pseudouridine(13) in tRNA. Its function is as follows. Responsible for synthesis of pseudouridine from uracil-13 in transfer RNAs. The polypeptide is tRNA pseudouridine synthase D (Histophilus somni (strain 129Pt) (Haemophilus somnus)).